The primary structure comprises 450 residues: Probable ECA polymerase (450 aa).

11 consecutive transmembrane segments (helical) span residues 6–26 (FSGLFVVWLLCTLFIATLTWF), 37–57 (VFFSLLFLLTFFFGFPLTSVL), 63–83 (VGVAPPEILLQALLSAGCFYA), 118–138 (VILMGIALVSVGIFFMHNGFL), 155–175 (GVALKRFFYFFIPAMLVVYFL), 181–201 (AWLFFLVSTVAFGLLTYMIVG), 207–227 (IIIAFAIFLFIGIIRGWISLW), 228–248 (MLAAAGVLGIVGMFWLALKRY), 341–361 (LVVMGGALFIPLGAIVVGLII), 378–398 (YKAAILHSFCFGAIFNMIVLA), and 410–430 (VFFIVVFGACLMIAKLLYWLF).

Belongs to the WzyE family. In terms of assembly, probably part of a complex composed of WzxE, WzyE and WzzE.

It is found in the cell inner membrane. It participates in bacterial outer membrane biogenesis; enterobacterial common antigen biosynthesis. Its function is as follows. Probably involved in the polymerization of enterobacterial common antigen (ECA) trisaccharide repeat units. This Shigella sonnei (strain Ss046) protein is Probable ECA polymerase.